We begin with the raw amino-acid sequence, 899 residues long: Protein translocase subunit SecA (899 aa).

Residues glutamine 87, 105–109 (GEGKT), and aspartate 516 contribute to the ATP site. Residues cysteine 884, cysteine 886, cysteine 895, and histidine 896 each contribute to the Zn(2+) site.

This sequence belongs to the SecA family. As to quaternary structure, monomer and homodimer. Part of the essential Sec protein translocation apparatus which comprises SecA, SecYEG and auxiliary proteins SecDF. Other proteins may also be involved. It depends on Zn(2+) as a cofactor.

The protein localises to the cell inner membrane. Its subcellular location is the cytoplasm. The catalysed reaction is ATP + H2O + cellular proteinSide 1 = ADP + phosphate + cellular proteinSide 2.. In terms of biological role, part of the Sec protein translocase complex. Interacts with the SecYEG preprotein conducting channel. Has a central role in coupling the hydrolysis of ATP to the transfer of proteins into and across the cell membrane, serving as an ATP-driven molecular motor driving the stepwise translocation of polypeptide chains across the membrane. In Borrelia garinii subsp. bavariensis (strain ATCC BAA-2496 / DSM 23469 / PBi) (Borreliella bavariensis), this protein is Protein translocase subunit SecA.